The following is a 213-amino-acid chain: N-(5'-phosphoribosyl)anthranilate isomerase (213 aa).

It belongs to the TrpF family.

The catalysed reaction is N-(5-phospho-beta-D-ribosyl)anthranilate = 1-(2-carboxyphenylamino)-1-deoxy-D-ribulose 5-phosphate. The protein operates within amino-acid biosynthesis; L-tryptophan biosynthesis; L-tryptophan from chorismate: step 3/5. In Leptospira interrogans serogroup Icterohaemorrhagiae serovar copenhageni (strain Fiocruz L1-130), this protein is N-(5'-phosphoribosyl)anthranilate isomerase.